The sequence spans 565 residues: Cytokinin dehydrogenase 2 (565 aa).

Residues 1-20 form the signal peptide; the sequence is MKQEQVRMAVLLMLNCFVKA. Asn-64 is a glycosylation site (N-linked (GlcNAc...) asparagine). One can recognise an FAD-binding PCMH-type domain in the interval 74–255; it reads RLAAAAAVLY…TRARIPLAPA (182 aa). Residues Ala-108, Gly-110, and Gly-112 each coordinate FAD. His-113 carries the pros-8alpha-FAD histidine modification. 7 residues coordinate FAD: Ser-114, Gln-118, Asp-179, Thr-184, Ser-190, Ile-194, and Ile-245. An N-linked (GlcNAc...) asparagine glycan is attached at Asn-464. Residues Tyr-517, Ser-554, and Gln-557 each contribute to the FAD site.

The protein belongs to the oxygen-dependent FAD-linked oxidoreductase family. Monomer. FAD serves as cofactor. Glycosylated. Mostly expressed in leaves, culms, inflorescence meristems, and flowers, especially in vascular tissues.

It is found in the secreted. The protein resides in the extracellular space. The catalysed reaction is N(6)-dimethylallyladenine + A + H2O = 3-methyl-2-butenal + adenine + AH2. In terms of biological role, catalyzes the oxidation of cytokinins, a family of N(6)-substituted adenine derivatives that are plant hormones, where the substituent is an isopentenyl group. Is a major QTL involved in grain yield. Modulates the number of reproductive organs by regulating the cytokinin accumulation in inflorescence meristems. Acts as negative regulator of panicle branching. The protein is Cytokinin dehydrogenase 2 of Oryza sativa subsp. japonica (Rice).